Here is a 266-residue protein sequence, read N- to C-terminus: Tryptophan synthase alpha chain (266 aa).

Residues E51 and D62 each act as proton acceptor in the active site.

The protein belongs to the TrpA family. As to quaternary structure, tetramer of two alpha and two beta chains.

It carries out the reaction (1S,2R)-1-C-(indol-3-yl)glycerol 3-phosphate + L-serine = D-glyceraldehyde 3-phosphate + L-tryptophan + H2O. Its pathway is amino-acid biosynthesis; L-tryptophan biosynthesis; L-tryptophan from chorismate: step 5/5. In terms of biological role, the alpha subunit is responsible for the aldol cleavage of indoleglycerol phosphate to indole and glyceraldehyde 3-phosphate. The protein is Tryptophan synthase alpha chain of Prochlorococcus marinus (strain NATL1A).